Here is a 244-residue protein sequence, read N- to C-terminus: MTKPFILLVPGSFAPETIYASTIAHLRTLGFPAVALRLPTTTKRMPLPAATMAEDADVIKRSVEAVLATGQEVVVVCHSYGGTPTTQALGELGEKKGVRRVVYLSAIIPRVGESNNDAMGGKKGELAFEMTEGYMHIDATTFAPAVCNDLSWDLAYEHTLNLAHHSGASFLEPATQAGYLDIPVSYIFCEKDMVVTPEKQSGFIDVVKEATGKEVHVVKLDAGHCPNWSMPEKLGDVIAEMAGM.

An N-terminal signal peptide occupies residues Met1 to Ala20. Catalysis depends on charge relay system residues Asp192 and His224. The N-linked (GlcNAc...) asparagine glycan is linked to Asn227.

Belongs to the AB hydrolase superfamily.

Its pathway is secondary metabolite biosynthesis. Its function is as follows. Probable hydrolase; part of the gene cluster that mediates the biosynthesis of squalestatin S1 (SQS1, also known as zaragozic acid A), a lead compound for the treatment of hyper-cholesterolemia by targeting squalene synthase (SS). Both phenylalanine and benzoic acid are known precursors of SQS1 and so it is unsurprising that the cluster also contains genes potentially involved in benzoate production such as phenyl-alanine ammonia lysase (PAL) M7, which catalyzes the first step in the degradation of phenylalanine, or the NADP-dependent dehydrogenase M3. The cluster contains two PKS encoding genes. The tetraketide synthase is responsible for the biosynthesis of the tetraketide sidechain of SQS1. The biosynthesis must involve 3 rounds of chain extension. After the first and second rounds methyl-transfer occurs, and in all rounds of extension the ketoreductase and dehydratase areactive. The enoyl reductase and C-MeT are not active in the final round of extension. The other PKS is therefore likely to encode squalestatin hexaketide synthase (SQHKS). The hexaketide main chain is initiated by benzoate which is an unusual starter unit for a highly reducing polyketide synthase. The cluster also contains a gene encoding a citrate synthase-like protein R3 presumably involved in linking the hexaketide to the oxaloacetate moiety. Formation of the tetraketide CoA may be catalyzed by the M9 CoA ligase, but the mechanism of release of the tetraketide and the hexaketide from their respective PKS remains unknown, although the cluster encodes a potential esterase (M8) and a possible hydrolase (M10) which could be involved in these processes. Two acyltransferases (AT), M4 and R4, are also encoded in the cluster. M4 is responsible for loading of the tetraketide sidechain from CoA onto the squalestatin core as the final step of biosynthesis. M4 appears to have a broad substrate selectivity for its acyl CoA substrate, allowing the in vitro synthesis of novel squalestatins. The biosynthesis of SQS1 requires several oxidative steps likely performed by oxidoreductases M1, R1 and R2. Finally, in support of the identification of the cluster as being responsible for SQS1 production, the cluster contains a gene encoding a putative squalene synthase (SS) R6, suggesting a likely mechanism for self-resistance. The protein is Probable hydrolase R7 of Phoma sp. (strain ATCC 20986 / MF5453).